The chain runs to 159 residues: uncharacterized protein (159 aa).

3 helical membrane passes run 10 to 30, 52 to 72, and 96 to 116; these read FLSM…SLFF, MLIL…VILL, and LTLI…PFVT.

It localises to the membrane. This is an uncharacterized protein from Escherichia coli (strain K12).